A 169-amino-acid polypeptide reads, in one-letter code: UPF0303 protein BCAN_A1444 (169 aa).

It belongs to the UPF0303 family.

This is UPF0303 protein BCAN_A1444 from Brucella canis (strain ATCC 23365 / NCTC 10854 / RM-666).